Consider the following 363-residue polypeptide: UDP-N-acetylglucosamine--N-acetylmuramyl-(pentapeptide) pyrophosphoryl-undecaprenol N-acetylglucosamine transferase (363 aa).

UDP-N-acetyl-alpha-D-glucosamine-binding positions include 10–12, Asn124, Ser195, Ile250, and Gln295; that span reads TGG.

It belongs to the glycosyltransferase 28 family. MurG subfamily.

The protein localises to the cell membrane. It catalyses the reaction di-trans,octa-cis-undecaprenyl diphospho-N-acetyl-alpha-D-muramoyl-L-alanyl-D-glutamyl-meso-2,6-diaminopimeloyl-D-alanyl-D-alanine + UDP-N-acetyl-alpha-D-glucosamine = di-trans,octa-cis-undecaprenyl diphospho-[N-acetyl-alpha-D-glucosaminyl-(1-&gt;4)]-N-acetyl-alpha-D-muramoyl-L-alanyl-D-glutamyl-meso-2,6-diaminopimeloyl-D-alanyl-D-alanine + UDP + H(+). It participates in cell wall biogenesis; peptidoglycan biosynthesis. In terms of biological role, cell wall formation. Catalyzes the transfer of a GlcNAc subunit on undecaprenyl-pyrophosphoryl-MurNAc-pentapeptide (lipid intermediate I) to form undecaprenyl-pyrophosphoryl-MurNAc-(pentapeptide)GlcNAc (lipid intermediate II). The protein is UDP-N-acetylglucosamine--N-acetylmuramyl-(pentapeptide) pyrophosphoryl-undecaprenol N-acetylglucosamine transferase of Listeria monocytogenes serotype 4b (strain CLIP80459).